The sequence spans 2342 residues: Outer kinetochore KNL1 complex subunit KNL1 (2342 aa).

The tract at residues 1–56 (MDGVSSEANEENDNIERPVRRRHSSILKPPRSPLQDLRGGNERVQESNALRNKKNS) is disordered. Positions 1–250 (MDGVSSEANE…FNDFIKRLKT (250 aa)) are may mediate oligomerization. Residues 1 to 728 (MDGVSSEANE…QSLFSTTKPL (728 aa)) form an interaction with BUB1 and BUB1B region. 2 interaction with microtubules regions span residues 17-34 (RPVR…RSPL) and 53-80 (KKNS…VRKS). An interaction with PP1CA; contains the protein phosphatase 1 (PP1) interaction motifs SILK, RVXF and phi-phi region spans residues 23-80 (HSSILKPPRSPLQDLRGGNERVQESNALRNKKNSRRVSFADTIKVFQTESHMKIVRKS). Ser-24 bears the Phosphoserine; by AURKB mark. A Phosphoserine modification is found at Ser-32. Ser-60 is modified (phosphoserine; by AURKB). The interval 174-190 (ENQMDLTSSHTVMITKG) is interaction with BUB1. The interval 210–226 (ANLKLHTEDSRMKKEVN) is interaction with BUB1B. A Phosphothreonine modification is found at Thr-539. Ser-578 and Ser-584 each carry phosphoserine. Residue Thr-586 is modified to Phosphothreonine. The tract at residues 620-646 (APESTSESHSQSKSSSDECEEITKSRN) is disordered. Residues 622 to 633 (ESTSESHSQSKS) are compositionally biased toward low complexity. At Ser-767 the chain carries Phosphoserine. Positions 855–1201 (EDESVQKPKF…VTDSHTVFID (347 aa)) are 2 X 104 AA approximate repeats. Repeat 1 spans residues 885–989 (DKTIVFSEDD…MTESHTVFID (105 aa)). A Phosphothreonine modification is found at Thr-901. 4 positions are modified to phosphoserine: Ser-956, Ser-1039, Ser-1076, and Ser-1088. The stretch at 1099–1201 (DKTIVFSENH…VTDSHTVFID (103 aa)) is repeat 2. Ser-1448 carries the phosphoserine modification. The segment at 1639-1662 (SNAKDSRDEENKKSHNGAETTSLP) is disordered. The segment covering 1642 to 1651 (KDSRDEENKK) has biased composition (basic and acidic residues). 2 positions are modified to phosphoserine: Ser-1675 and Ser-1773. A Nuclear localization signal motif is present at residues 1789–1803 (TWVQEEEDIHKEKKI). Residue Ser-1831 is modified to Phosphoserine. Residues Ser-1831 and Ser-1834 each carry the phosphoserine; by TTK modification. Phosphoserine occurs at positions 1845 and 1860. The required for interaction with ZWINT stretch occupies residues 1981-2108 (KMRHCSDKEL…LLELEVQKEQ (128 aa)). A coiled-coil region spans residues 2024–2133 (VQSAQNEREK…EELLDQLSLS (110 aa)). Residues 2091–2311 (EEEELQRNLL…GNTSQDDIAT (221 aa)) form an interaction with NSL1, DSN1 and required for assembly into the outer kinetochore region.

In terms of assembly, component of the KNL1 complex composed of KNL1 and ZWINT. Part of the ten-subunit outer kinetochore KMN network that includes the KNL1, MIS12 and NDC80 complexes; a bioriented kinetochore contains approximately 150 copies of the network. Interacts (via C-terminus) with the MIS12 complex subunits NSL1 (via C-terminus), PMF1 and DSN1; the interaction is direct. Interacts (via N-terminal region) with BUB1B (via BUB1 N-terminal domain); the interaction is direct and is required for cell cycle arrest upon activation of the mitotic spindle assembly checkpoint. Interacts (via N-terminal region) with BUB1 (via BUB1 N-terminal domain); the interaction is direct. Interacts with the protein phosphatase PP1 subunit PPP1CA; the interaction is direct and mutually exclusive with binding to microtubules. Interacts with the protein phosphatase PP1 subunit PPP1CC; the interaction is direct and mutually exclusive with binding to microtubules. Phosphorylation by AURKB negatively regulates its interaction with protein phosphatase 1 (PP1) subunit PPP1CA and with microtubules. Highly expressed in testis, where it is localized in germ cells, in particular in spermatocytes and in the pre-acrosome of round spermatids. Detected in the acrosome of ejaculated spermatozoa. Detected in adult thymus, bone marrow, colon, small intestine, appendix and placenta, and in fetal liver and thymus.

It localises to the nucleus. It is found in the chromosome. The protein localises to the centromere. Its subcellular location is the kinetochore. The protein resides in the cytoplasm. Acts as a component of the outer kinetochore KNL1 complex that serves as a docking point for spindle assembly checkpoint components and mediates microtubule-kinetochore interactions. Kinetochores, consisting of a centromere-associated inner segment and a microtubule-contacting outer segment, play a crucial role in chromosome segregation by mediating the physical connection between centromeric DNA and spindle microtubules. The outer kinetochore is made up of the ten-subunit KMN network, comprising the MIS12, NDC80 and KNL1 complexes, and auxiliary microtubule-associated components; together they connect the outer kinetochore with the inner kinetochore, bind microtubules, and mediate interactions with mitotic checkpoint proteins that delay anaphase until chromosomes are bioriented on the spindle. Required for kinetochore binding by a distinct subset of kMAPs (kinetochore-bound microtubule-associated proteins) and motors. Acts in coordination with CENPK to recruit the NDC80 complex to the outer kinetochore. Can bind either to microtubules or to the protein phosphatase 1 (PP1) catalytic subunits PPP1CA and PPP1CC (via overlapping binding sites), it has higher affinity for PP1. Recruits MAD2L1 to the kinetochore and also directly links BUB1 and BUB1B to the kinetochore. In addition to orienting mitotic chromosomes, it is also essential for alignment of homologous chromosomes during meiotic metaphase I. In meiosis I, required to activate the spindle assembly checkpoint at unattached kinetochores to correct erroneous kinetochore-microtubule attachments. The chain is Outer kinetochore KNL1 complex subunit KNL1 from Homo sapiens (Human).